The following is a 135-amino-acid chain: uncharacterized protein (135 aa).

The 116-residue stretch at 8–123 folds into the HotDog ACOT-type domain; it reads PQGTIVLKTL…IFIYVAIDET (116 aa).

The protein belongs to the acyl coenzyme A hydrolase family.

This is an uncharacterized protein from Buchnera aphidicola subsp. Schizaphis graminum (strain Sg).